A 358-amino-acid polypeptide reads, in one-letter code: Golgi-resident adenosine 3',5'-bisphosphate 3'-phosphatase (358 aa).

At methionine 1 the chain carries N-acetylmethionine. Over 1–12 the chain is Cytoplasmic; that stretch reads MAPMGIRLSPLG. Residues 13–33 traverse the membrane as a helical segment; sequence VAVFCLLGLGVLYHLYSGFLA. Residues 34 to 358 are Lumenal-facing; it reads GRFSLFGLGG…KLPDLEKMGH (325 aa). The tract at residues 85–106 is disordered; sequence RESNVLHEKSKGKTREGADDKM. The active-site Proton acceptor is aspartate 110. Mg(2+) contacts are provided by glutamate 133, aspartate 174, leucine 176, and aspartate 177. The active-site Proton acceptor is the threonine 179. Residues serine 242 and histidine 245 each coordinate AMP. A glycan (N-linked (GlcNAc...) asparagine) is linked at asparagine 259. The AMP site is built by glycine 268 and lysine 272. Mg(2+) is bound at residue aspartate 300.

This sequence belongs to the inositol monophosphatase superfamily. Mg(2+) is required as a cofactor. Contains N-linked glycan resistant to endoglycosydase H.

Its subcellular location is the golgi apparatus. The protein resides in the trans-Golgi network membrane. The catalysed reaction is adenosine 3',5'-bisphosphate + H2O = AMP + phosphate. It functions in the pathway sulfur metabolism. With respect to regulation, strongly inhibited by lithium. In terms of biological role, exhibits 3'-nucleotidase activity toward adenosine 3',5'-bisphosphate (PAP), namely hydrolyzes adenosine 3',5'-bisphosphate into adenosine 5'-monophosphate (AMP) and a phosphate. May play a role in the formation of skeletal elements derived through endochondral ossification, possibly by clearing adenosine 3',5'-bisphosphate produced by Golgi sulfotransferases during glycosaminoglycan sulfation. Has no activity toward 3'-phosphoadenosine 5'-phosphosulfate (PAPS) or inositol phosphate (IP) substrates including I(1)P, I(1,4)P2, I(1,3,4)P3, I(1,4,5)P3 and I(1,3,4,5)P4. The sequence is that of Golgi-resident adenosine 3',5'-bisphosphate 3'-phosphatase (BPNT2) from Callithrix jacchus (White-tufted-ear marmoset).